The chain runs to 278 residues: S-methyl-5'-thioadenosine phosphorylase (278 aa).

Phosphate is bound by residues Ser13, 55–56 (RH), and 88–89 (TA). Position 190 (Met190) interacts with substrate. Residue Thr191 coordinates phosphate. 214–216 (DYD) lines the substrate pocket.

This sequence belongs to the PNP/MTAP phosphorylase family. MTAP subfamily. As to quaternary structure, homotrimer.

The protein localises to the cytoplasm. The protein resides in the nucleus. It carries out the reaction S-methyl-5'-thioadenosine + phosphate = 5-(methylsulfanyl)-alpha-D-ribose 1-phosphate + adenine. It functions in the pathway amino-acid biosynthesis; L-methionine biosynthesis via salvage pathway; S-methyl-5-thio-alpha-D-ribose 1-phosphate from S-methyl-5'-thioadenosine (phosphorylase route): step 1/1. Catalyzes the reversible phosphorylation of S-methyl-5'-thioadenosine (MTA) to adenine and 5-methylthioribose-1-phosphate. Involved in the breakdown of MTA, a major by-product of polyamine biosynthesis. Responsible for the first step in the methionine salvage pathway after MTA has been generated from S-adenosylmethionine. Has broad substrate specificity with 6-aminopurine nucleosides as preferred substrates. The polypeptide is S-methyl-5'-thioadenosine phosphorylase (Anopheles gambiae (African malaria mosquito)).